A 269-amino-acid polypeptide reads, in one-letter code: MAYSSSNSDIEDDSSKSNSNLSLSVGYFPCEDTPCEDTTSWEDAPSKGPSIHFLPPVQGAWGTERIGRRMKRQDQIQDEPEQFCKLSIFLAWDVDIGSDNTDSRANRLLNGDNLWIDKLPKERTKLSVGKLNNLVQEFQIFLENLKDDDAVFPETAQQDFQLSSGSPPEMVQMISQATASQRTSAPEISSILSEQPEKDDTPSHTQAQCCLNFGWAFSWLRQRILPSLLRRDHPVNATKSPHRSAPTKRLFHRGKRIQPQETLELGHPI.

The tract at residues 1 to 21 (MAYSSSNSDIEDDSSKSNSNL) is disordered.

This is an uncharacterized protein from Homo sapiens (Human).